A 317-amino-acid polypeptide reads, in one-letter code: Ribosomal RNA large subunit methyltransferase F (317 aa).

The protein belongs to the methyltransferase superfamily. METTL16/RlmF family.

The protein resides in the cytoplasm. The catalysed reaction is adenosine(1618) in 23S rRNA + S-adenosyl-L-methionine = N(6)-methyladenosine(1618) in 23S rRNA + S-adenosyl-L-homocysteine + H(+). Its function is as follows. Specifically methylates the adenine in position 1618 of 23S rRNA. The protein is Ribosomal RNA large subunit methyltransferase F of Pseudomonas putida (strain ATCC 700007 / DSM 6899 / JCM 31910 / BCRC 17059 / LMG 24140 / F1).